Reading from the N-terminus, the 98-residue chain is NADH-ubiquinone oxidoreductase chain 4L (98 aa).

3 consecutive transmembrane segments (helical) span residues 2 to 22, 29 to 49, and 61 to 81; these read PSIS…MLMF, SLLC…LTIL, and ILLL…LVMV.

This sequence belongs to the complex I subunit 4L family. Core subunit of respiratory chain NADH dehydrogenase (Complex I) which is composed of 45 different subunits.

It localises to the mitochondrion inner membrane. The catalysed reaction is a ubiquinone + NADH + 5 H(+)(in) = a ubiquinol + NAD(+) + 4 H(+)(out). In terms of biological role, core subunit of the mitochondrial membrane respiratory chain NADH dehydrogenase (Complex I) which catalyzes electron transfer from NADH through the respiratory chain, using ubiquinone as an electron acceptor. Part of the enzyme membrane arm which is embedded in the lipid bilayer and involved in proton translocation. In Microcebus mittermeieri (Mittermeier's mouse lemur), this protein is NADH-ubiquinone oxidoreductase chain 4L (MT-ND4L).